We begin with the raw amino-acid sequence, 137 residues long: Putative pre-16S rRNA nuclease (137 aa).

Belongs to the YqgF nuclease family.

The protein resides in the cytoplasm. Could be a nuclease involved in processing of the 5'-end of pre-16S rRNA. The polypeptide is Putative pre-16S rRNA nuclease (Clostridium perfringens (strain ATCC 13124 / DSM 756 / JCM 1290 / NCIMB 6125 / NCTC 8237 / Type A)).